The chain runs to 162 residues: Protein FAM167B (162 aa).

This sequence belongs to the FAM167 (SEC) family.

This is Protein FAM167B (Fam167b) from Mus musculus (Mouse).